Consider the following 109-residue polypeptide: Parvalbumin, thymic (109 aa).

At A2 the chain carries N-acetylalanine. EF-hand domains lie at 39-74 (KTPDQIKKVFGILDQDKSGFIEEEELQLFLKNFSSS) and 78-109 (LTSAETKAFLAAGDTDGDGKIGVEEFQSLVKA). The Ca(2+) site is built by D52, D54, S56, E63, D91, D93, D95, K97, and E102.

Belongs to the parvalbumin family.

Appears to promote immune maturation in bone marrow cells in culture. Binds two calcium ions. The sequence is that of Parvalbumin, thymic from Gallus gallus (Chicken).